The chain runs to 179 residues: Probable chorismate pyruvate-lyase (179 aa).

Arginine 82, leucine 120, and glutamate 165 together coordinate substrate.

The protein belongs to the UbiC family.

The protein localises to the cytoplasm. It catalyses the reaction chorismate = 4-hydroxybenzoate + pyruvate. It participates in cofactor biosynthesis; ubiquinone biosynthesis. Its function is as follows. Removes the pyruvyl group from chorismate, with concomitant aromatization of the ring, to provide 4-hydroxybenzoate (4HB) for the ubiquinone pathway. The chain is Probable chorismate pyruvate-lyase from Vibrio parahaemolyticus serotype O3:K6 (strain RIMD 2210633).